We begin with the raw amino-acid sequence, 85 residues long: Small ribosomal subunit protein bS16 (85 aa).

The protein belongs to the bacterial ribosomal protein bS16 family.

The protein is Small ribosomal subunit protein bS16 of Metamycoplasma arthritidis (strain 158L3-1) (Mycoplasma arthritidis).